The primary structure comprises 174 residues: Large ribosomal subunit protein uL16 (174 aa).

It belongs to the universal ribosomal protein uL16 family.

This chain is Large ribosomal subunit protein uL16, found in Staphylothermus marinus (strain ATCC 43588 / DSM 3639 / JCM 9404 / F1).